The sequence spans 150 residues: 3-dehydroquinate dehydratase (150 aa).

Tyr-22 functions as the Proton acceptor in the catalytic mechanism. Substrate is bound by residues Asn-73, His-79, and Asp-86. His-99 (proton donor) is an active-site residue. Substrate-binding positions include 100 to 101 and Arg-110; that span reads LT.

The protein belongs to the type-II 3-dehydroquinase family. As to quaternary structure, homododecamer.

The catalysed reaction is 3-dehydroquinate = 3-dehydroshikimate + H2O. It participates in metabolic intermediate biosynthesis; chorismate biosynthesis; chorismate from D-erythrose 4-phosphate and phosphoenolpyruvate: step 3/7. Catalyzes a trans-dehydration via an enolate intermediate. The protein is 3-dehydroquinate dehydratase of Desulforudis audaxviator (strain MP104C).